The following is a 151-amino-acid chain: MQVILKEKVENLGVLGDIVNVKPGYARNFLIPFGKAVQATKANIETFEAQKAELEKAEKARFDAAVATAEAIKDKVYTIAAQAGEGGKLFGSVGTAEVAEAVSQASGKEIEKSQVRMPEGVIRSIGEFELTIHVYTDVDADIKVNVVASEA.

The protein belongs to the bacterial ribosomal protein bL9 family.

In terms of biological role, binds to the 23S rRNA. The protein is Large ribosomal subunit protein bL9 of Francisella philomiragia subsp. philomiragia (strain ATCC 25017 / CCUG 19701 / FSC 153 / O#319-036).